The sequence spans 353 residues: UDP-N-acetylglucosamine--N-acetylmuramyl-(pentapeptide) pyrophosphoryl-undecaprenol N-acetylglucosamine transferase (353 aa).

UDP-N-acetyl-alpha-D-glucosamine-binding positions include 10–12 (TGG), N124, S183, and Q283.

Belongs to the glycosyltransferase 28 family. MurG subfamily.

It is found in the cell inner membrane. The catalysed reaction is di-trans,octa-cis-undecaprenyl diphospho-N-acetyl-alpha-D-muramoyl-L-alanyl-D-glutamyl-meso-2,6-diaminopimeloyl-D-alanyl-D-alanine + UDP-N-acetyl-alpha-D-glucosamine = di-trans,octa-cis-undecaprenyl diphospho-[N-acetyl-alpha-D-glucosaminyl-(1-&gt;4)]-N-acetyl-alpha-D-muramoyl-L-alanyl-D-glutamyl-meso-2,6-diaminopimeloyl-D-alanyl-D-alanine + UDP + H(+). Its pathway is cell wall biogenesis; peptidoglycan biosynthesis. Functionally, cell wall formation. Catalyzes the transfer of a GlcNAc subunit on undecaprenyl-pyrophosphoryl-MurNAc-pentapeptide (lipid intermediate I) to form undecaprenyl-pyrophosphoryl-MurNAc-(pentapeptide)GlcNAc (lipid intermediate II). In Helicobacter pylori (strain ATCC 700392 / 26695) (Campylobacter pylori), this protein is UDP-N-acetylglucosamine--N-acetylmuramyl-(pentapeptide) pyrophosphoryl-undecaprenol N-acetylglucosamine transferase.